The chain runs to 524 residues: Magnesium/proton exchanger 2 (524 aa).

11 helical membrane passes run 28-48 (GVRA…LSAI), 88-108 (IADV…LATI), 125-145 (GTLV…CVVM), 157-177 (LGVW…LYII), 185-205 (VITL…LLHA), 325-345 (VIGI…AFIP), 349-369 (IAHG…IAYG), 377-397 (ISCV…AAGT), 430-450 (IYVG…LFVY), 462-482 (LSFS…VLVL), and 496-516 (MWAW…VVLS).

It belongs to the Ca(2+):cation antiporter (CaCA) (TC 2.A.19) family. MHX subfamily.

It is found in the vacuole membrane. Functionally, vacuolar transporter that exchanges protons with Mg(2+), Zn(2+) and Fe(2+) ions. May control the partitioning of Mg(2+) and Zn(2+) between plant organs. This chain is Magnesium/proton exchanger 2 (MHX2), found in Oryza sativa subsp. japonica (Rice).